We begin with the raw amino-acid sequence, 365 residues long: Chorismate synthase (365 aa).

NADP(+) is bound by residues R48 and R54. FMN contacts are provided by residues 131–133 (RSS), 243–244 (NA), G288, 303–307 (KPTSS), and R329.

This sequence belongs to the chorismate synthase family. As to quaternary structure, homotetramer. Requires FMNH2 as cofactor.

It carries out the reaction 5-O-(1-carboxyvinyl)-3-phosphoshikimate = chorismate + phosphate. It participates in metabolic intermediate biosynthesis; chorismate biosynthesis; chorismate from D-erythrose 4-phosphate and phosphoenolpyruvate: step 7/7. Its function is as follows. Catalyzes the anti-1,4-elimination of the C-3 phosphate and the C-6 proR hydrogen from 5-enolpyruvylshikimate-3-phosphate (EPSP) to yield chorismate, which is the branch point compound that serves as the starting substrate for the three terminal pathways of aromatic amino acid biosynthesis. This reaction introduces a second double bond into the aromatic ring system. This Rhizobium etli (strain CIAT 652) protein is Chorismate synthase.